The primary structure comprises 622 residues: Chaperone protein HscA homolog (622 aa).

The protein belongs to the heat shock protein 70 family.

Functionally, chaperone involved in the maturation of iron-sulfur cluster-containing proteins. Has a low intrinsic ATPase activity which is markedly stimulated by HscB. This chain is Chaperone protein HscA homolog, found in Acidovorax ebreus (strain TPSY) (Diaphorobacter sp. (strain TPSY)).